Here is a 360-residue protein sequence, read N- to C-terminus: Phosphoserine aminotransferase (360 aa).

Residue Arg-41 coordinates L-glutamate. Positions 101, 152, 172, and 195 each coordinate pyridoxal 5'-phosphate. An N6-(pyridoxal phosphate)lysine modification is found at Lys-196. 237–238 lines the pyridoxal 5'-phosphate pocket; sequence NT.

It belongs to the class-V pyridoxal-phosphate-dependent aminotransferase family. SerC subfamily. Homodimer. The cofactor is pyridoxal 5'-phosphate.

It is found in the cytoplasm. The enzyme catalyses O-phospho-L-serine + 2-oxoglutarate = 3-phosphooxypyruvate + L-glutamate. The catalysed reaction is 4-(phosphooxy)-L-threonine + 2-oxoglutarate = (R)-3-hydroxy-2-oxo-4-phosphooxybutanoate + L-glutamate. Its pathway is amino-acid biosynthesis; L-serine biosynthesis; L-serine from 3-phospho-D-glycerate: step 2/3. The protein operates within cofactor biosynthesis; pyridoxine 5'-phosphate biosynthesis; pyridoxine 5'-phosphate from D-erythrose 4-phosphate: step 3/5. In terms of biological role, catalyzes the reversible conversion of 3-phosphohydroxypyruvate to phosphoserine and of 3-hydroxy-2-oxo-4-phosphonooxybutanoate to phosphohydroxythreonine. The protein is Phosphoserine aminotransferase of Burkholderia multivorans (strain ATCC 17616 / 249).